Here is a 423-residue protein sequence, read N- to C-terminus: MTDDTEYRCSFCGKEHHQVDDLIAGPDVRICSECVVLSCEIVEDRRNEALAKQDAFIKRKQRSVLEGLPKPAEIYAFLDEYVIGQQKAKRDLSVAVYNHYKRLVSTKSESENEVELSKSNILLIGPTGCGKTYLAQTLARMLRVPFAVADATALTEAGYVGDDVENVLLKLLQDADFDITRAEAGIVCIDEIDKISRKADSPSITRDVSGEGVQQALLKILEGTVASVPLQGGKKHTQYEQASINTRNILFIVAGAFSGIEEIISSRIGRSNMGFGSDLLRKDTDVFDQILPEDLRKFGLIPEFIGRLPIVTAISHLDGEDMIRVLTEPKNALVKQYKRLFSLDGVSLGFDHEALEAIVELALKRKTGARALRSVMESILSPIMFDVPSRGDIESVRITAETVAGGGPHLTMRCARSNYIRSA.

Residues 1-50 (MTDDTEYRCSFCGKEHHQVDDLIAGPDVRICSECVVLSCEIVEDRRNEAL) enclose the ClpX-type ZB domain. Zn(2+) contacts are provided by C9, C12, C31, and C34. 126–133 (PTGCGKTY) contacts ATP.

This sequence belongs to the ClpX chaperone family. In terms of assembly, component of the ClpX-ClpP complex. Forms a hexameric ring that, in the presence of ATP, binds to fourteen ClpP subunits assembled into a disk-like structure with a central cavity, resembling the structure of eukaryotic proteasomes.

Functionally, ATP-dependent specificity component of the Clp protease. It directs the protease to specific substrates. Can perform chaperone functions in the absence of ClpP. The sequence is that of ATP-dependent Clp protease ATP-binding subunit ClpX from Tropheryma whipplei (strain Twist) (Whipple's bacillus).